A 273-amino-acid chain; its full sequence is Secretory carrier-associated membrane protein 6 (273 aa).

Residues 1–69 (MHHDPNPFDE…MGDSKSKARE (69 aa)) are disordered. Residues 1–131 (MHHDPNPFDE…LQKLQYLAFA (131 aa)) are Cytoplasmic-facing. Residues 20–30 (NGGGGGGGGGS) show a composition bias toward gly residues. Positions 68–94 (RELSSWETDLKRREADIKRREEALRNA) form a coiled coil. The next 4 helical transmembrane spans lie at 132-152 (SWLG…VCWI), 159-179 (LFFL…LIWY), 194-214 (FGWF…AAIA), and 239-259 (IIGI…LLSI). Topologically, residues 260–273 (GVLQRVYMYFRGNK) are cytoplasmic.

Belongs to the SCAMP family.

The protein resides in the cell membrane. It localises to the cytoplasmic vesicle. It is found in the secretory vesicle membrane. Functionally, probably involved in membrane trafficking. The chain is Secretory carrier-associated membrane protein 6 (SCAMP6) from Oryza sativa subsp. japonica (Rice).